A 642-amino-acid polypeptide reads, in one-letter code: 1,4-alpha-glucan branching enzyme GlgB (642 aa).

The active-site Nucleophile is the Asp-304. Residue Glu-355 is the Proton donor of the active site.

The protein belongs to the glycosyl hydrolase 13 family. GlgB subfamily. In terms of assembly, monomer.

The enzyme catalyses Transfers a segment of a (1-&gt;4)-alpha-D-glucan chain to a primary hydroxy group in a similar glucan chain.. Its pathway is glycan biosynthesis; glycogen biosynthesis. In terms of biological role, catalyzes the formation of the alpha-1,6-glucosidic linkages in glycogen by scission of a 1,4-alpha-linked oligosaccharide from growing alpha-1,4-glucan chains and the subsequent attachment of the oligosaccharide to the alpha-1,6 position. The protein is 1,4-alpha-glucan branching enzyme GlgB of Streptococcus pneumoniae serotype 4 (strain ATCC BAA-334 / TIGR4).